A 163-amino-acid chain; its full sequence is Ribosome maturation factor RimM (163 aa).

In terms of domain architecture, PRC barrel spans 94-162 (ADEYYYIDLI…DHLVIAADFI (69 aa)).

The protein belongs to the RimM family. As to quaternary structure, binds ribosomal protein uS19.

It localises to the cytoplasm. Functionally, an accessory protein needed during the final step in the assembly of 30S ribosomal subunit, possibly for assembly of the head region. Essential for efficient processing of 16S rRNA. May be needed both before and after RbfA during the maturation of 16S rRNA. It has affinity for free ribosomal 30S subunits but not for 70S ribosomes. This is Ribosome maturation factor RimM from Zymomonas mobilis subsp. mobilis (strain ATCC 31821 / ZM4 / CP4).